Consider the following 299-residue polypeptide: Pyridoxal 5'-phosphate synthase subunit PdxS (299 aa).

D24 serves as a coordination point for D-ribose 5-phosphate. K81 (schiff-base intermediate with D-ribose 5-phosphate) is an active-site residue. A D-ribose 5-phosphate-binding site is contributed by G153. R165 serves as a coordination point for D-glyceraldehyde 3-phosphate. D-ribose 5-phosphate-binding positions include G219 and G240 to S241.

It belongs to the PdxS/SNZ family. In terms of assembly, in the presence of PdxT, forms a dodecamer of heterodimers.

The catalysed reaction is aldehydo-D-ribose 5-phosphate + D-glyceraldehyde 3-phosphate + L-glutamine = pyridoxal 5'-phosphate + L-glutamate + phosphate + 3 H2O + H(+). It functions in the pathway cofactor biosynthesis; pyridoxal 5'-phosphate biosynthesis. Its function is as follows. Catalyzes the formation of pyridoxal 5'-phosphate from ribose 5-phosphate (RBP), glyceraldehyde 3-phosphate (G3P) and ammonia. The ammonia is provided by the PdxT subunit. Can also use ribulose 5-phosphate and dihydroxyacetone phosphate as substrates, resulting from enzyme-catalyzed isomerization of RBP and G3P, respectively. This chain is Pyridoxal 5'-phosphate synthase subunit PdxS, found in Methanococcus maripaludis (strain C7 / ATCC BAA-1331).